Consider the following 406-residue polypeptide: NAD(P)H-quinone oxidoreductase subunit H, organellar chromatophore (406 aa).

Belongs to the complex I 49 kDa subunit family. NDH is composed of at least 16 different subunits, 5 of which are encoded in the nucleus.

It is found in the plastid. Its subcellular location is the organellar chromatophore thylakoid membrane. It catalyses the reaction a quinone + NADH + H(+) = a quinol + NAD(+). Its function is as follows. NDH shuttles electrons from NAD(P)H:plastoquinone, via FMN and iron-sulfur (Fe-S) centers, to quinones in the photosynthetic chain and possibly in a chloroplast respiratory chain. The immediate electron acceptor for the enzyme in this species is believed to be plastoquinone. Couples the redox reaction to proton translocation, and thus conserves the redox energy in a proton gradient. In Paulinella chromatophora, this protein is NAD(P)H-quinone oxidoreductase subunit H, organellar chromatophore.